Reading from the N-terminus, the 513-residue chain is MGAAAKLAFAVFLISCSSGAILGRSETQECIFYNANWERDRTNRTGVESCYGDKDKRRHCFATWKNISSSIDIVKQGCWLDDINCYDRTDCIEKKDSPEVYFCCCEGNMCNERFSYFPEMEVTQPTSNPVTPKPPYYNILLYSLVPLMLVAGIVICAFWVYRHHKMAYPPVLVPTQDPGPPPPSPLLGLKPLQLLEVKARGGFGCVWKAQLLNEYVAVKIFPIQDKQSWQNEYEVYSLPGMKHENILQFIGAEKRGTSVDVDLWLITAFHEKGSLSDFLKANVVSWNELCHIAETMARGLAYLHEDIPGLKDGHKPAISHRDIKSKNVLLKNNLTACIADFGLALKFEAGKSAGDTHGQVGTRRYMAPEVLEGAINFQRDAFLRIDMYAMGLVLWELASRCTAADGPVDEYMLPFVEEIGQHPSLEDMQEVVVHKKKRPVLRDYWQKLAGMAMLCETIEECWDHDAEARLSAGCVGERITQMQRLTNIITTEDIVTVVTVVTNVDFPPKESSL.

A signal peptide spans 1 to 19 (MGAAAKLAFAVFLISCSSG). The Extracellular portion of the chain corresponds to 20 to 135 (AILGRSETQE…TSNPVTPKPP (116 aa)). 5 disulfide bridges follow: Cys-30-Cys-60, Cys-50-Cys-78, Cys-85-Cys-104, Cys-91-Cys-103, and Cys-105-Cys-110. Residues Asn-43 and Asn-66 are each glycosylated (N-linked (GlcNAc...) asparagine). The helical transmembrane segment at 136-161 (YYNILLYSLVPLMLVAGIVICAFWVY) threads the bilayer. Residues 162–513 (RHHKMAYPPV…VDFPPKESSL (352 aa)) lie on the Cytoplasmic side of the membrane. A Protein kinase domain is found at 192–485 (LQLLEVKARG…GERITQMQRL (294 aa)). ATP-binding positions include 198–206 (KARGGFGCV) and Lys-219. Asp-322 functions as the Proton acceptor in the catalytic mechanism.

The protein belongs to the protein kinase superfamily. TKL Ser/Thr protein kinase family. TGFB receptor subfamily. As to quaternary structure, part of a complex consisting of MAGI2/ARIP1, ACVR2A, ACVR1B and SMAD3. Interacts with MAGI2/ARIP1. Interacts with type I receptor ACVR1. Interacts with TSC22D1/TSC-22. Interacts with activin A/INHBA. The cofactor is Mg(2+). It depends on Mn(2+) as a cofactor.

It is found in the cell membrane. It carries out the reaction L-threonyl-[receptor-protein] + ATP = O-phospho-L-threonyl-[receptor-protein] + ADP + H(+). The catalysed reaction is L-seryl-[receptor-protein] + ATP = O-phospho-L-seryl-[receptor-protein] + ADP + H(+). Functionally, on ligand binding, forms a receptor complex consisting of two type II and two type I transmembrane serine/threonine kinases. Type II receptors phosphorylate and activate type I receptors which autophosphorylate, then bind and activate SMAD transcriptional regulators. Receptor for activin A, activin B and inhibin A. Mediates induction of adipogenesis by GDF6. This chain is Activin receptor type-2A (ACVR2A), found in Ovis aries (Sheep).